The chain runs to 296 residues: Glycine and tyrosine-rich protein (296 aa).

A signal peptide spans 1–18 (MKVLVTALIISFSTAVLT). Residues 157–280 (MESRLRPQAT…NQPEETPAPN (124 aa)) are disordered. The span at 172–264 (TGGQPSTGGK…STGGQPSTGG (93 aa)) shows a compositional bias: low complexity.

In terms of tissue distribution, component of the acid-insoluble and acid-soluble organic matrix of calcified layers of the shell (at protein level).

Its subcellular location is the secreted. The chain is Glycine and tyrosine-rich protein from Lottia gigantea (Giant owl limpet).